The primary structure comprises 322 residues: AA9 family lytic polysaccharide monooxygenase B (322 aa).

Positions 1-17 are cleaved as a signal peptide; that stretch reads MFSKSIIAASLLTAVTA. A Cu(2+)-binding site is contributed by H18. N53 and N68 each carry an N-linked (GlcNAc...) asparagine glycan. A disulfide bridge links C56 with C173. A Cu(2+)-binding site is contributed by H87. N-linked (GlcNAc...) asparagine glycosylation is found at N121 and N133. O2-binding residues include H159 and Q168. Y170 is a binding site for Cu(2+). Residue N197 is glycosylated (N-linked (GlcNAc...) asparagine).

Belongs to the polysaccharide monooxygenase AA9 family. It depends on Cu(2+) as a cofactor.

The protein resides in the secreted. It carries out the reaction [(1-&gt;4)-beta-D-glucosyl]n+m + reduced acceptor + O2 = 4-dehydro-beta-D-glucosyl-[(1-&gt;4)-beta-D-glucosyl]n-1 + [(1-&gt;4)-beta-D-glucosyl]m + acceptor + H2O.. In terms of biological role, lytic polysaccharide monooxygenase (LPMO) that depolymerizes crystalline and amorphous polysaccharides via the oxidation of scissile alpha- or beta-(1-4)-glycosidic bonds, yielding C1 and C4 oxidation products. Catalysis by LPMOs requires the reduction of the active-site copper from Cu(II) to Cu(I) by a reducing agent and H(2)O(2) or O(2) as a cosubstrate. In Botryotinia fuckeliana (strain B05.10) (Noble rot fungus), this protein is AA9 family lytic polysaccharide monooxygenase B.